Consider the following 511-residue polypeptide: DEP domain-containing protein 7 (511 aa).

In terms of domain architecture, DEP spans 46 to 136 (LQTQVEVKKR…SSCSLYRFTT (91 aa)).

This sequence belongs to the DEPDC7 family.

This is DEP domain-containing protein 7 (DEPDC7) from Pongo abelii (Sumatran orangutan).